A 70-amino-acid polypeptide reads, in one-letter code: Small ribosomal subunit protein bS21A (70 aa).

It belongs to the bacterial ribosomal protein bS21 family.

This is Small ribosomal subunit protein bS21A (rpsU1) from Burkholderia mallei (strain ATCC 23344).